A 1331-amino-acid chain; its full sequence is ABC multidrug transporter MDR2 (1331 aa).

Composition is skewed to basic and acidic residues over residues 1 to 20 (MVEV…KQEN) and 31 to 41 (SDKEKVAKKGN). Residues 1–51 (MVEVSEKPNTQDDGVSKQENRNPASSSSSTSDKEKVAKKGNSDATKSSTPE) form a disordered region. The next 4 membrane-spanning stretches (helical) occupy residues 93-113 (MIFL…LPLF), 147-167 (YFVY…VGFI), 219-239 (KVGL…IGYV), and 242-262 (WKLA…MGGI). Residues 97–387 (AIVSLASIAA…VAPNTQAFAS (291 aa)) form the ABC transmembrane type-1 1 domain. Asn-293 carries an N-linked (GlcNAc...) asparagine glycan. The next 2 membrane-spanning stretches (helical) occupy residues 325 to 345 (LGIM…LGFW) and 358 to 378 (LSAI…IGNV). Positions 422–667 (IEFRGIKHIY…KGTYLQLVEA (246 aa)) constitute an ABC transporter 1 domain. 457–464 (GPSGSGKS) contacts ATP. Asn-529 is a glycosylation site (N-linked (GlcNAc...) asparagine). The next 2 helical transmembrane spans lie at 762–782 (LCGF…SVFF) and 810–830 (FLML…IFAI). One can recognise an ABC transmembrane type-1 2 domain in the interval 764–1051 (GFFFAVLSGA…VFSFSPDMGK (288 aa)). Asn-860 carries an N-linked (GlcNAc...) asparagine glycan. 4 helical membrane passes run 884 to 904 (LGTI…ALAF), 910 to 930 (LVCI…FWIL), 995 to 1015 (ASQS…GGLL), and 1025 to 1045 (FFLC…VFSF). The region spanning 1086–1324 (IEFRDVHFRY…KGRYYELVHM (239 aa)) is the ABC transporter 2 domain. Asn-1108 carries an N-linked (GlcNAc...) asparagine glycan. 1121–1128 (GPSGCGKS) contacts ATP.

This sequence belongs to the ABC transporter superfamily. ABCB family. Multidrug resistance exporter (TC 3.A.1.201) subfamily.

Its subcellular location is the cell membrane. The catalysed reaction is itraconazole(in) + ATP + H2O = itraconazole(out) + ADP + phosphate + H(+). Functionally, pleiotropic ABC efflux transporter that may be involved in the modulation susceptibility to a wide range of unrelated cytotoxic compounds, including terbinafine, 4-nitroquinoline N-oxide, and ethidium bromide. May play a role in pathogenicity. This is ABC multidrug transporter MDR2 from Trichophyton interdigitale (strain MR816).